A 137-amino-acid polypeptide reads, in one-letter code: MSAHLQWMVVRNCSSFLIKRNKQTYSTEPNNLKARNSFRYNGLIHRKTVGVEPAADGKGVVVVMKRRSGQRKPATSYVRTTINKNARATLSSIRHMIRKNKYRPDLRMAAIRRASAILRSQKPVVVKRKRTRPTKSS.

Position 2 is an N-acetylserine (Ser2). Residues Lys58 and Lys65 each participate in a glycyl lysine isopeptide (Lys-Gly) (interchain with G-Cter in SUMO2) cross-link. Ser115 is modified (phosphoserine).

The protein belongs to the eukaryotic ribosomal protein eL28 family. In terms of assembly, component of the large ribosomal subunit.

The protein localises to the cytoplasm. Its function is as follows. Component of the large ribosomal subunit. The ribosome is a large ribonucleoprotein complex responsible for the synthesis of proteins in the cell. In Mus musculus (Mouse), this protein is Large ribosomal subunit protein eL28 (Rpl28).